We begin with the raw amino-acid sequence, 317 residues long: o-succinylbenzoate synthase (317 aa).

Residues 71–73 and Lys-95 each bind 2-succinylbenzoate; that span reads NAT. Lys-97 (proton donor) is an active-site residue. The Mg(2+) site is built by Asp-128, Glu-154, and Asp-177. 128–130 contributes to the 2-succinylbenzoate binding site; the sequence is DVN. Lys-201 provides a ligand contact to 2-succinylbenzoate. Lys-201 (proton acceptor) is an active-site residue.

This sequence belongs to the mandelate racemase/muconate lactonizing enzyme family. MenC type 1 subfamily. As to quaternary structure, monomer. A divalent metal cation is required as a cofactor.

The enzyme catalyses (1R,6R)-6-hydroxy-2-succinyl-cyclohexa-2,4-diene-1-carboxylate = 2-succinylbenzoate + H2O. Its pathway is quinol/quinone metabolism; 1,4-dihydroxy-2-naphthoate biosynthesis; 1,4-dihydroxy-2-naphthoate from chorismate: step 4/7. It participates in quinol/quinone metabolism; menaquinone biosynthesis. In terms of biological role, converts 2-succinyl-6-hydroxy-2,4-cyclohexadiene-1-carboxylate (SHCHC) to 2-succinylbenzoate (OSB). Does not show N-succinylamino acid racemase (NSAR) activity with N-succinyl-L-phenylglycine as substrate. This Thermobifida fusca (strain YX) protein is o-succinylbenzoate synthase.